Reading from the N-terminus, the 228-residue chain is Protein-L-isoaspartate O-methyltransferase (228 aa).

S74 is a catalytic residue.

Belongs to the methyltransferase superfamily. L-isoaspartyl/D-aspartyl protein methyltransferase family.

The protein resides in the cytoplasm. It carries out the reaction [protein]-L-isoaspartate + S-adenosyl-L-methionine = [protein]-L-isoaspartate alpha-methyl ester + S-adenosyl-L-homocysteine. Catalyzes the methyl esterification of L-isoaspartyl residues in peptides and proteins that result from spontaneous decomposition of normal L-aspartyl and L-asparaginyl residues. It plays a role in the repair and/or degradation of damaged proteins. The polypeptide is Protein-L-isoaspartate O-methyltransferase (Methylorubrum extorquens (strain PA1) (Methylobacterium extorquens)).